The sequence spans 246 residues: MTTFSVPIDNGDSMKIAEEESQRTLYPYVTGTSIVAIKYKDGVLMASDMGGSYGSTLRYKNIERVKAIGKHSLLGASGEISDFQEILRYLDELTLNDNMWDDGNSLGPKEIHNYLTRVMYNRRNKFNPLWNTLVLGGVKNGKSYLGMVSMIGVSFEDDHVATGFGNHLARPILRDEWHADLSFEDGVKLLEKCMRVLLYRDRSAINKLQIAKITEEGVTVSQPYSLKTYWEFSSFHNPTAGAAGSW.

A propeptide spanning residues 1-23 is cleaved from the precursor; sequence MTTFSVPIDNGDSMKIAEEESQR. The Nucleophile role is filled by T24.

This sequence belongs to the peptidase T1B family. In terms of assembly, component of the 20S core complex of the 26S proteasome. The 26S proteasome is composed of a core protease (CP), known as the 20S proteasome, capped at one or both ends by the 19S regulatory particle (RP/PA700). The 20S proteasome core is composed of 28 subunits that are arranged in four stacked rings, resulting in a barrel-shaped structure. The two end rings are each formed by seven alpha subunits, and the two central rings are each formed by seven beta subunits. The catalytic chamber with the active sites is on the inside of the barrel. Ubiquitous low levels, higher expression in siliques and flowers.

The protein localises to the cytoplasm. It localises to the nucleus. In terms of biological role, non-catalytic component of the proteasome, a multicatalytic proteinase complex which is characterized by its ability to cleave peptides with Arg, Phe, Tyr, Leu, and Glu adjacent to the leaving group at neutral or slightly basic pH. The proteasome has an ATP-dependent proteolytic activity. In Arabidopsis thaliana (Mouse-ear cress), this protein is Proteasome subunit beta type-4 (PBG1).